We begin with the raw amino-acid sequence, 115 residues long: Large ribosomal subunit protein uL24 (115 aa).

It belongs to the universal ribosomal protein uL24 family. Part of the 50S ribosomal subunit.

Its function is as follows. One of two assembly initiator proteins, it binds directly to the 5'-end of the 23S rRNA, where it nucleates assembly of the 50S subunit. One of the proteins that surrounds the polypeptide exit tunnel on the outside of the subunit. The protein is Large ribosomal subunit protein uL24 of Amoebophilus asiaticus (strain 5a2).